Reading from the N-terminus, the 828-residue chain is Periplasmic nitrate reductase (828 aa).

The tat-type signal signal peptide spans 1–31; sequence MKLSRRSFMKANAVAAAAAAAGLSVPGVARA. Residues 39-95 form the 4Fe-4S Mo/W bis-MGD-type domain; it reads IKWDKAPCRFCGTGCGVLVGTQQGRVVACQGDPDAPVNRGLNCIKGYFLPKIMYGKD. Residues Cys-46, Cys-49, Cys-53, and Cys-81 each contribute to the [4Fe-4S] cluster site. Mo-bis(molybdopterin guanine dinucleotide) is bound by residues Lys-83, Gln-150, Asn-175, Cys-179, 212 to 219, 243 to 247, 262 to 264, Met-372, Gln-376, Asn-482, 508 to 509, Lys-531, Asp-558, and 718 to 727; these read WGSNMAEM, STYQH, QSD, SD, and TGRVLEHWHT. Residue Phe-794 participates in substrate binding. The Mo-bis(molybdopterin guanine dinucleotide) site is built by Asn-802 and Lys-819.

It belongs to the prokaryotic molybdopterin-containing oxidoreductase family. NasA/NapA/NarB subfamily. As to quaternary structure, component of the periplasmic nitrate reductase NapAB complex composed of NapA and NapB. Requires [4Fe-4S] cluster as cofactor. Mo-bis(molybdopterin guanine dinucleotide) is required as a cofactor. In terms of processing, predicted to be exported by the Tat system. The position of the signal peptide cleavage has not been experimentally proven.

The protein localises to the periplasm. The catalysed reaction is 2 Fe(II)-[cytochrome] + nitrate + 2 H(+) = 2 Fe(III)-[cytochrome] + nitrite + H2O. In terms of biological role, catalytic subunit of the periplasmic nitrate reductase complex NapAB. Receives electrons from NapB and catalyzes the reduction of nitrate to nitrite. This is Periplasmic nitrate reductase from Escherichia coli O127:H6 (strain E2348/69 / EPEC).